The sequence spans 185 residues: Homeobox-leucine zipper protein ATHB-22 (185 aa).

The segment at residues 76–135 (TSEQLKFLERSFQEEIKLNPDRKMKLNPDRKMKLSKELGLQPRQIAVWFQNRKARWKNKQ) is a DNA-binding region (homeobox). The leucine-zipper stretch occupies residues 136 to 164 (LEHLYESLRQEFDIVSREKELLQEELIQL).

The protein belongs to the HD-ZIP homeobox family. Class I subfamily. Expressed in siliques.

It is found in the nucleus. Probable transcription factor. This is Homeobox-leucine zipper protein ATHB-22 (ATHB-22) from Arabidopsis thaliana (Mouse-ear cress).